A 360-amino-acid chain; its full sequence is Ribosomal RNA large subunit methyltransferase M (360 aa).

S-adenosyl-L-methionine-binding positions include Ser187, 220–223 (CPGG), Asp239, Asp259, and Asp276. Residue Lys305 is the Proton acceptor of the active site.

The protein belongs to the class I-like SAM-binding methyltransferase superfamily. RNA methyltransferase RlmE family. RlmM subfamily. As to quaternary structure, monomer.

It is found in the cytoplasm. The catalysed reaction is cytidine(2498) in 23S rRNA + S-adenosyl-L-methionine = 2'-O-methylcytidine(2498) in 23S rRNA + S-adenosyl-L-homocysteine + H(+). In terms of biological role, catalyzes the 2'-O-methylation at nucleotide C2498 in 23S rRNA. This is Ribosomal RNA large subunit methyltransferase M from Shewanella pealeana (strain ATCC 700345 / ANG-SQ1).